Consider the following 569-residue polypeptide: Adenine deaminase (569 aa).

The protein belongs to the metallo-dependent hydrolases superfamily. Adenine deaminase family. Mn(2+) serves as cofactor.

It carries out the reaction adenine + H2O + H(+) = hypoxanthine + NH4(+). The sequence is that of Adenine deaminase from Desulfatibacillum aliphaticivorans.